Here is a 181-residue protein sequence, read N- to C-terminus: Ribonuclease HII (181 aa).

An RNase H type-2 domain is found at Met1–Ile181. Positions 6, 7, and 98 each coordinate a divalent metal cation.

It belongs to the RNase HII family. Mn(2+) serves as cofactor. The cofactor is Mg(2+).

The protein resides in the cytoplasm. It catalyses the reaction Endonucleolytic cleavage to 5'-phosphomonoester.. In terms of biological role, endonuclease that specifically degrades the RNA of RNA-DNA hybrids. This is Ribonuclease HII from Borrelia hermsii (strain HS1 / DAH).